We begin with the raw amino-acid sequence, 126 residues long: Glycine cleavage system H protein (126 aa).

The region spanning 22 to 104 is the Lipoyl-binding domain; sequence VATIGITEYA…YEKAWMVKIE (83 aa). Position 63 is an N6-lipoyllysine (lysine 63).

This sequence belongs to the GcvH family. As to quaternary structure, the glycine cleavage system is composed of four proteins: P, T, L and H. It depends on (R)-lipoate as a cofactor.

Functionally, the glycine cleavage system catalyzes the degradation of glycine. The H protein shuttles the methylamine group of glycine from the P protein to the T protein. Is also involved in protein lipoylation via its role as an octanoyl/lipoyl carrier protein intermediate. In Staphylococcus epidermidis (strain ATCC 35984 / DSM 28319 / BCRC 17069 / CCUG 31568 / BM 3577 / RP62A), this protein is Glycine cleavage system H protein.